Consider the following 178-residue polypeptide: CDP-archaeol synthase (178 aa).

5 helical membrane-spanning segments follow: residues 7 to 27 (LFVS…ACIF), 56 to 76 (FFGV…SNLG), 91 to 111 (VIIG…GSFL), 125 to 145 (VLDQ…YYLV), and 149 to 169 (ISIT…IIAY).

The protein belongs to the CDP-archaeol synthase family. It depends on Mg(2+) as a cofactor.

It is found in the cell membrane. The enzyme catalyses 2,3-bis-O-(geranylgeranyl)-sn-glycerol 1-phosphate + CTP + H(+) = CDP-2,3-bis-O-(geranylgeranyl)-sn-glycerol + diphosphate. It participates in membrane lipid metabolism; glycerophospholipid metabolism. In terms of biological role, catalyzes the formation of CDP-2,3-bis-(O-geranylgeranyl)-sn-glycerol (CDP-archaeol) from 2,3-bis-(O-geranylgeranyl)-sn-glycerol 1-phosphate (DGGGP) and CTP. This reaction is the third ether-bond-formation step in the biosynthesis of archaeal membrane lipids. This Methanococcus vannielii (strain ATCC 35089 / DSM 1224 / JCM 13029 / OCM 148 / SB) protein is CDP-archaeol synthase.